The sequence spans 171 residues: uncharacterized protein (171 aa).

The first 20 residues, 1-20 (MRDFYLFLGAVFLLVLGVWA), serve as a signal peptide directing secretion.

This is an uncharacterized protein from Aquifex aeolicus (strain VF5).